Here is a 473-residue protein sequence, read N- to C-terminus: FAD-dependent monooxygenase ctvC (473 aa).

The FAD site is built by E37, A51, and R110. Residues 218 to 238 (IGPGFTFLIFPAAGDSLFWVL) form a helical membrane-spanning segment. FAD contacts are provided by D310 and A323. N358 carries an N-linked (GlcNAc...) asparagine glycan. Residues 451 to 471 (LVYCFGVVILLWISWAVFNVN) form a helical membrane-spanning segment.

This sequence belongs to the paxM FAD-dependent monooxygenase family. It depends on FAD as a cofactor.

The protein localises to the membrane. It functions in the pathway mycotoxin biosynthesis. FAD-dependent monooxygenase; part of the gene cluster that mediates the biosynthesis of citreoviridin, an inhibitor of the of F1-ATPase beta-subunit. The HR-PKS ctvA accepts acetyl-CoA as the starter unit and catalyzes eight iterations of malonyl-CoA extension and four iterations of SAM-dependent methylation at C4, C12, C14, and C16. The KR and DH domains selectively act on the first six iterations to generate the hexaene chain. In the last three iterations, the KR and DH domains terminate their functions to yield a beta,delta-diketo ester moiety, which then undergoes intramolecular cyclization to yield an alpha-pyrone intermediate. Subsequently, ctvB methylates the alpha-pyrone hydroxyl group to generate citreomontanin. In order to form the tetrahydrofuran ring with the correct stereochemistry, the terminal alkenes of citreomontanin need to undergo isomerization to yield a (17Z)-hexaene, a step that could be catalyzed by ctvC. The (17Z)-hexaene then undergoes bisepoxidation by ctvC to form a (17R,16R,15S,14R)-bisepoxide moiety. Lastly, ctvD acts as a regioselective hydrolase to form the tetrahydrofuran ring with the substituents in the correct absolute configuration, completing the biosynthesis of citreoviridin. This is FAD-dependent monooxygenase ctvC from Aspergillus terreus (strain NIH 2624 / FGSC A1156).